We begin with the raw amino-acid sequence, 241 residues long: Orotidine 5'-phosphate decarboxylase (241 aa).

Residues Asp-19, Lys-41, 69-78, Thr-124, Arg-185, Gln-194, Gly-214, and Arg-215 each bind substrate; that span reads DLKFFDIPAT. Catalysis depends on Lys-71, which acts as the Proton donor.

The protein belongs to the OMP decarboxylase family. Type 1 subfamily. As to quaternary structure, homodimer.

The catalysed reaction is orotidine 5'-phosphate + H(+) = UMP + CO2. It participates in pyrimidine metabolism; UMP biosynthesis via de novo pathway; UMP from orotate: step 2/2. Functionally, catalyzes the decarboxylation of orotidine 5'-monophosphate (OMP) to uridine 5'-monophosphate (UMP). This is Orotidine 5'-phosphate decarboxylase from Stenotrophomonas maltophilia (strain K279a).